A 228-amino-acid polypeptide reads, in one-letter code: Ribosomal RNA small subunit methyltransferase G (228 aa).

S-adenosyl-L-methionine-binding positions include G70, L75, A120–E121, and R138. Residues R207–A228 are disordered.

This sequence belongs to the methyltransferase superfamily. RNA methyltransferase RsmG family.

The protein resides in the cytoplasm. In terms of biological role, specifically methylates the N7 position of guanine in position 518 of 16S rRNA. In Mycobacterium marinum (strain ATCC BAA-535 / M), this protein is Ribosomal RNA small subunit methyltransferase G.